Consider the following 101-residue polypeptide: Doublesex- and mab-3-related transcription factor 1 (101 aa).

The DM DNA-binding region spans 1–13; the sequence is SLIAERQRVMAAQ. Residues 52 to 75 show a composition bias toward low complexity; it reads CLLLESSSPTHSTSTVTTVSTSPS. Residues 52-79 are disordered; the sequence is CLLLESSSPTHSTSTVTTVSTSPSEGRM.

This sequence belongs to the DMRT family.

The protein localises to the nucleus. In terms of biological role, may be required for testis development. In Alligator mississippiensis (American alligator), this protein is Doublesex- and mab-3-related transcription factor 1 (DMRT1).